Consider the following 72-residue polypeptide: Translation initiation factor IF-1 (72 aa).

One can recognise an S1-like domain in the interval 1-72 (MAKEESIEVE…SKGRITYRYK (72 aa)).

Belongs to the IF-1 family. In terms of assembly, component of the 30S ribosomal translation pre-initiation complex which assembles on the 30S ribosome in the order IF-2 and IF-3, IF-1 and N-formylmethionyl-tRNA(fMet); mRNA recruitment can occur at any time during PIC assembly.

Its subcellular location is the cytoplasm. Its function is as follows. One of the essential components for the initiation of protein synthesis. Stabilizes the binding of IF-2 and IF-3 on the 30S subunit to which N-formylmethionyl-tRNA(fMet) subsequently binds. Helps modulate mRNA selection, yielding the 30S pre-initiation complex (PIC). Upon addition of the 50S ribosomal subunit IF-1, IF-2 and IF-3 are released leaving the mature 70S translation initiation complex. This chain is Translation initiation factor IF-1, found in Chlorobaculum tepidum (strain ATCC 49652 / DSM 12025 / NBRC 103806 / TLS) (Chlorobium tepidum).